The primary structure comprises 473 residues: 3-isopropylmalate dehydratase large subunit (473 aa).

Residues C349, C409, and C412 each coordinate [4Fe-4S] cluster.

It belongs to the aconitase/IPM isomerase family. LeuC type 1 subfamily. As to quaternary structure, heterodimer of LeuC and LeuD. It depends on [4Fe-4S] cluster as a cofactor.

The catalysed reaction is (2R,3S)-3-isopropylmalate = (2S)-2-isopropylmalate. Its pathway is amino-acid biosynthesis; L-leucine biosynthesis; L-leucine from 3-methyl-2-oxobutanoate: step 2/4. Catalyzes the isomerization between 2-isopropylmalate and 3-isopropylmalate, via the formation of 2-isopropylmaleate. The chain is 3-isopropylmalate dehydratase large subunit from Gloeobacter violaceus (strain ATCC 29082 / PCC 7421).